We begin with the raw amino-acid sequence, 218 residues long: Ribonuclease T (218 aa).

An Exonuclease domain is found at valine 24–phenylalanine 198. The Mg(2+) site is built by aspartate 27, glutamate 29, histidine 185, and aspartate 190. Residue histidine 185 is the Proton donor/acceptor of the active site.

It belongs to the RNase T family. As to quaternary structure, homodimer. Mg(2+) serves as cofactor.

Trims short 3' overhangs of a variety of RNA species, leaving a one or two nucleotide 3' overhang. Responsible for the end-turnover of tRNA: specifically removes the terminal AMP residue from uncharged tRNA (tRNA-C-C-A). Also appears to be involved in tRNA biosynthesis. This is Ribonuclease T from Histophilus somni (strain 129Pt) (Haemophilus somnus).